The following is a 372-amino-acid chain: Aminomethyltransferase (372 aa).

It belongs to the GcvT family. In terms of assembly, the glycine cleavage system is composed of four proteins: P, T, L and H.

It carries out the reaction N(6)-[(R)-S(8)-aminomethyldihydrolipoyl]-L-lysyl-[protein] + (6S)-5,6,7,8-tetrahydrofolate = N(6)-[(R)-dihydrolipoyl]-L-lysyl-[protein] + (6R)-5,10-methylene-5,6,7,8-tetrahydrofolate + NH4(+). Its function is as follows. The glycine cleavage system catalyzes the degradation of glycine. This chain is Aminomethyltransferase, found in Burkholderia orbicola (strain MC0-3).